Here is a 475-residue protein sequence, read N- to C-terminus: Sulfate adenylyltransferase subunit 1 (475 aa).

One can recognise a tr-type G domain in the interval 25 to 239; sequence KSLLRFLTCG…EVLETVEIQR (215 aa). The interval 34–41 is G1; it reads GSVDDGKS. 34 to 41 lines the GTP pocket; sequence GSVDDGKS. The segment at 92-96 is G2; it reads GITID. A G3 region spans residues 113–116; that stretch reads DTPG. GTP contacts are provided by residues 113 to 117 and 168 to 171; these read DTPGH and NKMD. The tract at residues 168-171 is G4; it reads NKMD. Residues 206–208 are G5; that stretch reads SAL.

Belongs to the TRAFAC class translation factor GTPase superfamily. Classic translation factor GTPase family. CysN/NodQ subfamily. As to quaternary structure, heterodimer composed of CysD, the smaller subunit, and CysN.

It carries out the reaction sulfate + ATP + H(+) = adenosine 5'-phosphosulfate + diphosphate. It participates in sulfur metabolism; hydrogen sulfide biosynthesis; sulfite from sulfate: step 1/3. Functionally, with CysD forms the ATP sulfurylase (ATPS) that catalyzes the adenylation of sulfate producing adenosine 5'-phosphosulfate (APS) and diphosphate, the first enzymatic step in sulfur assimilation pathway. APS synthesis involves the formation of a high-energy phosphoric-sulfuric acid anhydride bond driven by GTP hydrolysis by CysN coupled to ATP hydrolysis by CysD. The polypeptide is Sulfate adenylyltransferase subunit 1 (Escherichia coli O157:H7).